The chain runs to 208 residues: HTLV-1 basic zipper factor (208 aa).

The tract at residues 59-93 (RLRWGPVGEEAPPRGETHRDRQRRAEEKRKRKRER) is disordered. Residues 69 to 86 (APPRGETHRDRQRRAEEK) show a composition bias toward basic and acidic residues. 3 consecutive short sequence motifs (nuclear localization signal) follow at residues 86-91 (KRKRKR), 115-119 (RRRRA), and 136-140 (RRERK). A compositionally biased stretch (basic and acidic residues) spans 125–143 (DRARRKLEEEERRERKWRQ). The tract at residues 125–160 (DRARRKLEEEERRERKWRQTEQGAKQRSARKEKMTE) is disordered.

The protein belongs to the HTLV-1 HBZ protein family. Interacts with host ATF4; this interaction inhibits viral RNA transcriptional activation by preventing ATF4 binding to Tax-responsive elements. Interacts with host CREB1; this interaction inhibits host CREB1 transcriptional activity. Interacts with host JUN, JUNB and JUND. Interacts with host EP300.

It is found in the host nucleus. Functionally, contributes to the regulation of viral RNA transcription by interacting with host proteins involved in transcriptional activation such as ATF4, or CREB1, and by inhibiting their activity. Additionally, HBZ suppresses host NF-kappa-B-driven transcription mediated by host RELA as well as transcription of some classical NF-kappa-B target genes, including IL8, IL2RA, IRF4, VCAM1, and VEGFA. The sequence is that of HTLV-1 basic zipper factor (HBZ) from Human T-cell leukemia virus 1 (isolate Melanesia mel5 subtype C) (HTLV-1).